The chain runs to 470 residues: Origin of replication complex subunit 4 (470 aa).

63-70 (GPRGCGKA) provides a ligand contact to ATP.

Belongs to the ORC4 family. In terms of assembly, component of the origin recognition complex (ORC) composed of at least ORC1, ORC2, ORC3, ORC4, ORC5 and ORC6. ORC is regulated in a cell-cycle and development dependent manner. It is sequentially assembled at the exit from anaphase of mitosis and disassembled as cells enter S phase. Expressed in the shoot apical meristem (SAM), leaves, ears and roots (including root tips).

It localises to the nucleus. Its function is as follows. Component of the origin recognition complex (ORC) that binds origins of replication. DNA-binding is ATP-dependent. The specific DNA sequences that define origins of replication have not been identified yet. ORC is required to assemble the pre-replication complex necessary to initiate DNA replication. The chain is Origin of replication complex subunit 4 from Oryza sativa subsp. japonica (Rice).